A 344-amino-acid chain; its full sequence is MAQSTTSETHTRDLDRDCTTLSRHVLEQLQSFSPEAQDLAALMQRIGLAAKLIARRLSHAGLVDDALGFTGEINVQGEAVKRMDVYANQVFISVFRQSGLVCRLASEEMEKPYYIPENCPIGRYTLLYDPLDGSANVDVDLNVGSIFAVRRQEFYDESHEAKDLLQPGDRQIAAGYVLYGASTLLVYSMGQGVHVFVLDPSLGEFVLAQSDIQLPNSGQIYSVNEGNFWQWPEGYRQYIREMHRREGYSGRYSGALVADFHRILMQGGVFLYPETVKNPTGKLRLLYEAAPMAFLAEQAGGKASDGQKPILLRQPQALHERCPLIIGSAADVDFVEACLAESVP.

Residues Glu-107, Asp-129, Leu-131, and Asp-132 each coordinate Mg(2+). Substrate contacts are provided by Asn-224, Tyr-252, and Lys-282. Glu-288 is a Mg(2+) binding site.

The protein belongs to the FBPase class 1 family. Homotetramer. Requires Mg(2+) as cofactor.

The protein localises to the cytoplasm. It carries out the reaction beta-D-fructose 1,6-bisphosphate + H2O = beta-D-fructose 6-phosphate + phosphate. It functions in the pathway carbohydrate biosynthesis; Calvin cycle. This Synechococcus sp. (strain ATCC 27144 / PCC 6301 / SAUG 1402/1) (Anacystis nidulans) protein is Fructose-1,6-bisphosphatase class 1.